Here is a 225-residue protein sequence, read N- to C-terminus: Transmembrane protein 40 (225 aa).

The residue at position 1 (M1) is an N-acetylmethionine. Over residues 1 to 14 (MEASGSSSQSQDSG) the composition is skewed to low complexity. A disordered region spans residues 1-96 (MEASGSSSQS…RRDSLRGADH (96 aa)). Positions 15–29 (GVHRETEDHYQETEL) are enriched in basic and acidic residues. The segment covering 30–39 (HKHHGKARER) has biased composition (basic residues). Low complexity predominate over residues 46-68 (SSSSSSSSSSSSSSSSSSSSSSD). Residues 78–87 (GPRKHRRRPR) are compositionally biased toward basic residues. Residue S129 is modified to Phosphoserine. A run of 2 helical transmembrane segments spans residues 152-172 (FFHF…YHYY) and 179-199 (LGVG…FGLV).

It is found in the membrane. This is Transmembrane protein 40 (Tmem40) from Mus musculus (Mouse).